A 172-amino-acid chain; its full sequence is S-ribosylhomocysteine lyase (172 aa).

Fe cation is bound by residues histidine 54, histidine 58, and cysteine 128.

This sequence belongs to the LuxS family. As to quaternary structure, homodimer. Requires Fe cation as cofactor.

The enzyme catalyses S-(5-deoxy-D-ribos-5-yl)-L-homocysteine = (S)-4,5-dihydroxypentane-2,3-dione + L-homocysteine. Functionally, involved in the synthesis of autoinducer 2 (AI-2) which is secreted by bacteria and is used to communicate both the cell density and the metabolic potential of the environment. The regulation of gene expression in response to changes in cell density is called quorum sensing. Catalyzes the transformation of S-ribosylhomocysteine (RHC) to homocysteine (HC) and 4,5-dihydroxy-2,3-pentadione (DPD). This chain is S-ribosylhomocysteine lyase, found in Vibrio cholerae serotype O1 (strain ATCC 39541 / Classical Ogawa 395 / O395).